The chain runs to 354 residues: Methionine import ATP-binding protein MetN 2 (354 aa).

The region spanning 6–250 (IELKNISVHF…PQKPLTKEFI (245 aa)) is the ABC transporter domain. 42-49 (GYSGAGKS) lines the ATP pocket.

Belongs to the ABC transporter superfamily. Methionine importer (TC 3.A.1.24) family. The complex is composed of two ATP-binding proteins (MetN), two transmembrane proteins (MetI) and a solute-binding protein (MetQ).

The protein localises to the cell membrane. It carries out the reaction L-methionine(out) + ATP + H2O = L-methionine(in) + ADP + phosphate + H(+). It catalyses the reaction D-methionine(out) + ATP + H2O = D-methionine(in) + ADP + phosphate + H(+). Functionally, part of the ABC transporter complex MetNIQ involved in methionine import. Responsible for energy coupling to the transport system. In Oenococcus oeni (strain ATCC BAA-331 / PSU-1), this protein is Methionine import ATP-binding protein MetN 2.